Here is a 513-residue protein sequence, read N- to C-terminus: GMP synthase [glutamine-hydrolyzing] (513 aa).

The Glutamine amidotransferase type-1 domain occupies leucine 9–glutamine 198. The active-site Nucleophile is the cysteine 86. Residues histidine 172 and glutamate 174 contribute to the active site. The 190-residue stretch at tryptophan 199 to arginine 388 folds into the GMPS ATP-PPase domain. Residue serine 226–serine 232 coordinates ATP.

In terms of assembly, homodimer.

The catalysed reaction is XMP + L-glutamine + ATP + H2O = GMP + L-glutamate + AMP + diphosphate + 2 H(+). Its pathway is purine metabolism; GMP biosynthesis; GMP from XMP (L-Gln route): step 1/1. Functionally, catalyzes the synthesis of GMP from XMP. The chain is GMP synthase [glutamine-hydrolyzing] from Staphylococcus aureus (strain Mu3 / ATCC 700698).